The chain runs to 369 residues: Type 2 DNA topoisomerase 6 subunit A (369 aa).

A Topo IIA-type catalytic domain is found at 11-149 (KGDALAREKL…FHMRPEEDGA (139 aa)). The O-(5'-phospho-DNA)-tyrosine intermediate role is filled by Tyr-106. The Mg(2+) site is built by Glu-202 and Asp-254.

Belongs to the TOP6A family. As to quaternary structure, homodimer. Heterotetramer of two Top6A and two Top6B chains. Mg(2+) serves as cofactor.

It catalyses the reaction ATP-dependent breakage, passage and rejoining of double-stranded DNA.. In terms of biological role, relaxes both positive and negative superturns and exhibits a strong decatenase activity. The protein is Type 2 DNA topoisomerase 6 subunit A of Methanosarcina mazei (strain ATCC BAA-159 / DSM 3647 / Goe1 / Go1 / JCM 11833 / OCM 88) (Methanosarcina frisia).